We begin with the raw amino-acid sequence, 501 residues long: MFDNILEQQRIEKAKELKNLGINPYPHFLEKEMSLKTFKDRFSYILEQVEKRDESVNAVVAGRLKLLRIAGKSIFANIEDEDTNLQIYFSKDSVGEELYTILKKNLEVGDIVLVKGFPFVTKTGEFSLHASEVKLATKAIVPLPEKYHGLTDIEQRYRKRYVDMIMNAEVRKDFLVRSKVVSLIRHFFENKGFLEVETPMMHPIAGGANAKPFVTFHNSLGVERFLRIAPELYLKRLVVGGFEAVFEINRCFRNEGMDLTHNPEFTTIEFYWAYHNYKDLMDLTEELFALLLDKLNLGKTIEFDGKMIDFSKPFERITYKDALCKYGGLDRDLIEDKEKILTKLKADGFEANEKLELGHLQAELFDNYVEEKLINPTFVIDFPISISPLSRRSDEDSQIAERFELFICGRELANGFNELNDPLDQYERFLKQIEAKNAGDEEACEMDEDFVNALGYGMPPTAGQGIGIDRLVMLLTNKKSIRDVILFPAMRPLKSELKEKE.

Residues glutamate 404 and glutamate 411 each coordinate Mg(2+).

It belongs to the class-II aminoacyl-tRNA synthetase family. In terms of assembly, homodimer. Mg(2+) is required as a cofactor.

It is found in the cytoplasm. The enzyme catalyses tRNA(Lys) + L-lysine + ATP = L-lysyl-tRNA(Lys) + AMP + diphosphate. This is Lysine--tRNA ligase from Campylobacter jejuni (strain RM1221).